Here is a 153-residue protein sequence, read N- to C-terminus: Ribosome maturation factor RimP (153 aa).

This sequence belongs to the RimP family.

The protein localises to the cytoplasm. Its function is as follows. Required for maturation of 30S ribosomal subunits. The protein is Ribosome maturation factor RimP of Christiangramia forsetii (strain DSM 17595 / CGMCC 1.15422 / KT0803) (Gramella forsetii).